A 491-amino-acid chain; its full sequence is Transcription factor AP-2-alpha (491 aa).

The tract at residues 74-161 is disordered; that stretch reads GASNGTARLP…GQRQSQESGL (88 aa). Positions 111 to 116 match the PPxY motif motif; sequence YFPPPY. Composition is skewed to low complexity over residues 119–128 and 142–155; these read IYPQSQDPYS and QPQP…GQRQ. Glycyl lysine isopeptide (Lys-Gly) (interchain with G-Cter in SUMO2) cross-links involve residues lysine 231 and lysine 238. The residue at position 293 (serine 293) is a Phosphoserine; by PKA. An H-S-H (helix-span-helix), dimerization region spans residues 334-464; it reads RRKAANVTLL…YLTEALKAMD (131 aa). Polar residues predominate over residues 468-481; that stretch reads LSNNPNSHTDNSAK. A disordered region spans residues 468–491; that stretch reads LSNNPNSHTDNSAKSSDKEEKHRK. Positions 482-491 are enriched in basic and acidic residues; sequence SSDKEEKHRK.

Belongs to the AP-2 family. As to quaternary structure, binds DNA as a dimer. Can form homodimers or heterodimers with other AP-2 family members. Interacts with WWOX. Interacts with CITED4. Interacts with UBE2I. Interacts with RALBP1 in a complex also containing EPN1 and NUMB during interphase and mitosis. Interacts with KCTD1; this interaction represses transcription activation. Interacts (via C-terminus) with CITED2 (via C-terminus); the interaction stimulates TFAP2A-transcriptional activation. Interacts (via N-terminus) with EP300 (via N-terminus); the interaction requires CITED2. Interacts with KCTD15; this interaction inhibits TFAP2A transcriptional activation.

It localises to the nucleus. In terms of biological role, sequence-specific DNA-binding protein that interacts with inducible viral and cellular enhancer elements to regulate transcription of selected genes. AP-2 factors bind to the consensus sequence 5'-GCCNNNGGC-3' and activate genes involved in a large spectrum of important biological functions including proper eye, face, body wall, limb and neural tube development. They also suppress a number of genes including MCAM/MUC18, C/EBP alpha and MYC. AP-2-alpha is the only AP-2 protein required for early morphogenesis of the lens vesicle. Together with the CITED2 coactivator, stimulates the PITX2 P1 promoter transcription activation. Associates with chromatin to the PITX2 P1 promoter region. The protein is Transcription factor AP-2-alpha (TFAP2A) of Ovis aries (Sheep).